Reading from the N-terminus, the 232-residue chain is Phosphoadenosine 5'-phosphosulfate reductase (232 aa).

C228 functions as the Nucleophile; cysteine thiosulfonate intermediate in the catalytic mechanism.

The protein belongs to the PAPS reductase family. CysH subfamily.

Its subcellular location is the cytoplasm. It catalyses the reaction [thioredoxin]-disulfide + sulfite + adenosine 3',5'-bisphosphate + 2 H(+) = [thioredoxin]-dithiol + 3'-phosphoadenylyl sulfate. It functions in the pathway sulfur metabolism; hydrogen sulfide biosynthesis; sulfite from sulfate: step 3/3. Its function is as follows. Catalyzes the formation of sulfite from phosphoadenosine 5'-phosphosulfate (PAPS) using thioredoxin as an electron donor. The protein is Phosphoadenosine 5'-phosphosulfate reductase of Synechococcus sp. (strain ATCC 27144 / PCC 6301 / SAUG 1402/1) (Anacystis nidulans).